Here is a 277-residue protein sequence, read N- to C-terminus: Basic leucine zipper 9 (277 aa).

Residues 73–141 are disordered; that stretch reads ADSPVSANKP…ESAKRSRRRK (69 aa). Residue Ser-100 is modified to Phosphoserine. Positions 109–118 are enriched in polar residues; that stretch reads AGQSEMTNDP. Residues 120–183 enclose the bZIP domain; that stretch reads DLKRIRRMNS…RSAGTNNRVL (64 aa). The segment at 122–141 is basic motif; that stretch reads KRIRRMNSNRESAKRSRRRK. The short motif at 124–131 is the Nuclear localization signal element; sequence IRRMNSNR. Residues 148 to 162 are leucine-zipper; that stretch reads LETQVDSLKGDNSTL.

Belongs to the bZIP family. In terms of assembly, homodimer. Interacts with BZIP1, BZIP2, BZIP10, BZIP11, BZIP25, BZIP44, BZIP53 and BZIP63. Phosphorylated. As to expression, expressed in roots, shoots, stems, young leaves, and flowers, mostly in vascular tissues (e.g. phloem).

It is found in the nucleus. Functionally, transcription factor. This is Basic leucine zipper 9 (BZIP9) from Arabidopsis thaliana (Mouse-ear cress).